The chain runs to 1072 residues: DNA-directed RNA polymerase subunit beta (1072 aa).

This sequence belongs to the RNA polymerase beta chain family. In plastids the minimal PEP RNA polymerase catalytic core is composed of four subunits: alpha, beta, beta', and beta''. When a (nuclear-encoded) sigma factor is associated with the core the holoenzyme is formed, which can initiate transcription.

The protein localises to the plastid. It is found in the chloroplast. The enzyme catalyses RNA(n) + a ribonucleoside 5'-triphosphate = RNA(n+1) + diphosphate. DNA-dependent RNA polymerase catalyzes the transcription of DNA into RNA using the four ribonucleoside triphosphates as substrates. This Cycas taitungensis (Prince sago) protein is DNA-directed RNA polymerase subunit beta.